The chain runs to 298 residues: Protease HtpX homolog (298 aa).

2 helical membrane passes run 14-34 (VVLL…AGYL) and 39-59 (YAMG…SMIF). Position 143 (His-143) interacts with Zn(2+). The active site involves Glu-144. His-147 contributes to the Zn(2+) binding site. A run of 2 helical transmembrane segments spans residues 158–178 (IAVA…RMLW) and 197–217 (IITL…ASLI). Glu-226 contributes to the Zn(2+) binding site.

It belongs to the peptidase M48B family. Requires Zn(2+) as cofactor.

Its subcellular location is the cell membrane. The chain is Protease HtpX homolog from Streptococcus pyogenes serotype M28 (strain MGAS6180).